Here is a 276-residue protein sequence, read N- to C-terminus: Orotidine 5'-phosphate decarboxylase (276 aa).

Lys-96 (proton donor) is an active-site residue.

Belongs to the OMP decarboxylase family. Type 2 subfamily.

The catalysed reaction is orotidine 5'-phosphate + H(+) = UMP + CO2. It participates in pyrimidine metabolism; UMP biosynthesis via de novo pathway; UMP from orotate: step 2/2. This is Orotidine 5'-phosphate decarboxylase from Porphyromonas gingivalis (strain ATCC 33277 / DSM 20709 / CIP 103683 / JCM 12257 / NCTC 11834 / 2561).